The primary structure comprises 246 residues: Orotidine 5'-phosphate decarboxylase (246 aa).

Residues Asp18, Lys39, 66–75 (DLKFHDIPAT), Thr130, Arg192, Gln201, Gly221, and Arg222 each bind substrate. Lys68 functions as the Proton donor in the catalytic mechanism.

The protein belongs to the OMP decarboxylase family. Type 1 subfamily. Homodimer.

It catalyses the reaction orotidine 5'-phosphate + H(+) = UMP + CO2. Its pathway is pyrimidine metabolism; UMP biosynthesis via de novo pathway; UMP from orotate: step 2/2. In terms of biological role, catalyzes the decarboxylation of orotidine 5'-monophosphate (OMP) to uridine 5'-monophosphate (UMP). This Parasynechococcus marenigrum (strain WH8102) protein is Orotidine 5'-phosphate decarboxylase.